The sequence spans 468 residues: uncharacterized protein (468 aa).

The signal sequence occupies residues 1–27 (MRKWYFILLAGVLTSVILAFVYDKTKA). PbH1 repeat units follow at residues 125-154 (KHDIAISGLTIQDLSVSSEEATAIGIYVSG), 156-185 (SSHIAIKDNHIRGIKTTADEGNAHGIAVYG), 189-214 (MKDIRIEDNTVEKLTLGASEAVVLNG), 216-238 (IDGFTVAGNVVRNNNNIGIDLIG), 249-283 (VRNGVVENNTVYQNSTYGNPAYGDEYSAGGIYVDG), 284-305 (GHDIEIKNNTVYDNDIGIEATS), 312-334 (ANAIQITDNKVYNNAYTGISIGG), and 397-420 (NEGNTVNHNVYHKEADQDGIWMWK).

Its subcellular location is the secreted. This is an uncharacterized protein from Bacillus subtilis (strain 168).